The sequence spans 329 residues: Ubiquitin carboxyl-terminal hydrolase isozyme L5 (329 aa).

One can recognise a UCH catalytic domain in the interval 7-225 (EWCLMESDPG…IRFNLMAIVS (219 aa)). Position 47 is an N6-succinyllysine (K47). C88 serves as the catalytic Nucleophile. K158 carries the post-translational modification N6-acetyllysine. H164 functions as the Proton donor in the catalytic mechanism. Residue K289 is modified to N6-succinyllysine. A ULD domain is found at 291–319 (NYLPFIMELLKTLAEHQQLIPLVEKAKEK). The interval 313–329 (VEKAKEKQNAKKAQETK) is interaction with ADRM1.

Belongs to the peptidase C12 family. As to quaternary structure, component of the 19S (PA700) regulatory complex of the 26S proteasome. Interacts with ADRM1 and NFRKB. Component of the INO80 complex; specifically part of a complex module associated with N-terminus of INO80.

It is found in the cytoplasm. Its subcellular location is the nucleus. The catalysed reaction is Thiol-dependent hydrolysis of ester, thioester, amide, peptide and isopeptide bonds formed by the C-terminal Gly of ubiquitin (a 76-residue protein attached to proteins as an intracellular targeting signal).. With respect to regulation, activated by ADRM1. Inhibited by interaction with NFRKB. Protease that specifically cleaves 'Lys-48'-linked polyubiquitin chains. Deubiquitinating enzyme associated with the 19S regulatory subunit of the 26S proteasome. Putative regulatory component of the INO80 complex; however is inactive in the INO80 complex and is activated by a transient interaction of the INO80 complex with the proteasome via ADRM1. This chain is Ubiquitin carboxyl-terminal hydrolase isozyme L5 (UCHL5), found in Sus scrofa (Pig).